We begin with the raw amino-acid sequence, 93 residues long: MNKYWLSGIIFLAYGLASPAFSSETATLAINGRISPPTCSMAMVNGQPQQHCGQLTYNVDTRHLFSSPVKGVTTEVVVAGSDSKRRIVLNRYD.

A signal peptide spans 1 to 22 (MNKYWLSGIIFLAYGLASPAFS).

This is an uncharacterized protein from Escherichia coli (strain K12).